The sequence spans 395 residues: Putative transport protein sll0063 (395 aa).

The next 8 helical transmembrane spans lie at Leu24–Ala44, Ile50–Leu70, Phe91–Ala111, Val180–Leu200, Ala245–Leu265, Val269–Ala289, Met295–Ala315, and Phe328–Val348.

Belongs to the autoinducer-2 exporter (AI-2E) (TC 2.A.86) family.

It localises to the cell membrane. The chain is Putative transport protein sll0063 from Synechocystis sp. (strain ATCC 27184 / PCC 6803 / Kazusa).